The sequence spans 229 residues: Large ribosomal subunit protein uL1 (229 aa).

This sequence belongs to the universal ribosomal protein uL1 family. In terms of assembly, part of the 50S ribosomal subunit.

Binds directly to 23S rRNA. The L1 stalk is quite mobile in the ribosome, and is involved in E site tRNA release. Its function is as follows. Protein L1 is also a translational repressor protein, it controls the translation of the L11 operon by binding to its mRNA. This is Large ribosomal subunit protein uL1 from Desulforamulus reducens (strain ATCC BAA-1160 / DSM 100696 / MI-1) (Desulfotomaculum reducens).